The primary structure comprises 141 residues: Putative pre-16S rRNA nuclease (141 aa).

It belongs to the YqgF nuclease family.

The protein resides in the cytoplasm. Functionally, could be a nuclease involved in processing of the 5'-end of pre-16S rRNA. This chain is Putative pre-16S rRNA nuclease, found in Coxiella burnetii (strain CbuG_Q212) (Coxiella burnetii (strain Q212)).